Here is a 181-residue protein sequence, read N- to C-terminus: Large ribosomal subunit protein uL10 (181 aa).

This sequence belongs to the universal ribosomal protein uL10 family. In terms of assembly, part of the ribosomal stalk of the 50S ribosomal subunit. The N-terminus interacts with L11 and the large rRNA to form the base of the stalk. The C-terminus forms an elongated spine to which L12 dimers bind in a sequential fashion forming a multimeric L10(L12)X complex.

In terms of biological role, forms part of the ribosomal stalk, playing a central role in the interaction of the ribosome with GTP-bound translation factors. The chain is Large ribosomal subunit protein uL10 from Bradyrhizobium diazoefficiens (strain JCM 10833 / BCRC 13528 / IAM 13628 / NBRC 14792 / USDA 110).